Reading from the N-terminus, the 576-residue chain is 4-alpha-glucanotransferase DPE1, chloroplastic/amyloplastic (576 aa).

A chloroplast-targeting transit peptide spans 1–45 (MSILLRPSSSPSLCSSLKLFRLSSPDSLIDAAVLRNRTKPSQSFR).

This sequence belongs to the disproportionating enzyme family.

The protein resides in the plastid. The protein localises to the chloroplast. It is found in the amyloplast. The enzyme catalyses Transfers a segment of a (1-&gt;4)-alpha-D-glucan to a new position in an acceptor, which may be glucose or a (1-&gt;4)-alpha-D-glucan.. Its function is as follows. Chloroplastic alpha-glucanotransferase involved in maltotriose metabolism. Probably uses maltotriose as substrate to transfer a maltosyl unit from one molecule to another, resulting in glucose and maltopentaose. The latter can then be further metabolized to maltose and maltotriose by beta-amylase. Required for normal starch degradation in leaves. The sequence is that of 4-alpha-glucanotransferase DPE1, chloroplastic/amyloplastic (DPE1) from Arabidopsis thaliana (Mouse-ear cress).